The sequence spans 1208 residues: Urease accessory protein 2 (1208 aa).

2 coiled-coil regions span residues 187–362 and 400–469; these read RDKI…EKAA and IKAL…MHEQ. In terms of domain architecture, SMC hinge spans 523-633; it reads DGVFGPLYDL…ICEDLQTAAH (111 aa). Coiled coils occupy residues 688-771 and 817-903; these read HIEV…YEEE and NRLE…VQTQ. A disordered region spans residues 748-773; that stretch reads ESSLEEAEGASRDAKAKRASYEEELR. Positions 756–773 are enriched in basic and acidic residues; the sequence is GASRDAKAKRASYEEELR.

This sequence belongs to the SMC family. SMC3 subfamily. In terms of assembly, component of cohesin complexes.

The protein localises to the nucleus. Its function is as follows. Central component of cohesin, a complex required for chromosome cohesion during the cell cycle. The cohesin complex may form a large proteinaceous ring within which sister chromatids can be trapped. At anaphase, the complex is cleaved and dissociates from chromatin, allowing sister chromatids to segregate. Cohesion is coupled to DNA replication and is involved in DNA repair. The cohesin complex also plays an important role in spindle pole assembly during mitosis and in chromosomes movement. Is unrelated to urease function in C.neoformans. The sequence is that of Urease accessory protein 2 from Cryptococcus neoformans var. grubii serotype A (strain H99 / ATCC 208821 / CBS 10515 / FGSC 9487) (Filobasidiella neoformans var. grubii).